The following is a 677-amino-acid chain: Transcription factor IIIB 90 kDa subunit (677 aa).

The TFIIB-type zinc-finger motif lies at 2-33 (TGRVCRGCGGTDIELDAARGDAVCTACGSVLE). Residues Cys6, Cys9, Cys25, and Cys28 each contribute to the Zn(2+) site. 2 consecutive repeat copies span residues 91-172 (RHIH…LLAR) and 185-269 (LYIP…EFED). Disordered stretches follow at residues 340-368 (KGGL…TEDE) and 385-413 (LLGG…SLLD). Thr365 is subject to Phosphothreonine. Ser450 is modified (phosphoserine). 2 disordered regions span residues 501–521 (YKEH…ASTA) and 544–653 (RGLS…EDGE). Residue Ser553 is modified to Phosphoserine. Positions 640–653 (EEADEEEPDEEDGE) are enriched in acidic residues.

It belongs to the TFIIB family. TFIIIB comprises at least the TATA-binding protein (TBP) and the B-related factor 1 (BRF1/TFIIIB90). Interacts with BDP1. Interacts with MAF1.

It localises to the nucleus. In terms of biological role, general activator of RNA polymerase which utilizes different TFIIIB complexes at structurally distinct promoters. The isoform 1 is involved in the transcription of tRNA, adenovirus VA1, 7SL and 5S RNA. Isoform 2 is required for transcription of the U6 promoter. This chain is Transcription factor IIIB 90 kDa subunit (BRF1), found in Homo sapiens (Human).